The sequence spans 127 residues: MLYSVLAISLGASAGAVSRWLLGLGFNTLFPTIPPGTLLANLLGGYLIGIAVTFFAANPNLPPEWRLLVITGFLGGLTTFSTFSAEVTTLLQQGRLLWAGGAIAVHVIGSLVMTLLGMATMSLLQRS.

The next 4 membrane-spanning stretches (helical) occupy residues 6–26 (LAIS…GLGF), 37–57 (TLLA…FFAA), 67–87 (LLVI…SAEV), and 96–116 (LLWA…MTLL). The Na(+) site is built by G75 and T78.

Belongs to the fluoride channel Fluc/FEX (TC 1.A.43) family.

The protein localises to the cell inner membrane. It carries out the reaction fluoride(in) = fluoride(out). Its activity is regulated as follows. Na(+) is not transported, but it plays an essential structural role and its presence is essential for fluoride channel function. Its function is as follows. Fluoride-specific ion channel. Important for reducing fluoride concentration in the cell, thus reducing its toxicity. The sequence is that of Fluoride-specific ion channel FluC from Tolumonas auensis (strain DSM 9187 / NBRC 110442 / TA 4).